A 345-amino-acid polypeptide reads, in one-letter code: UPF0324 membrane protein CTC_01844 (345 aa).

The next 10 helical transmembrane spans lie at 7 to 24 (YSVG…SGFI), 28 to 50 (IPYR…NPIV), 70 to 87 (LAII…VLEV), 91 to 113 (SLIV…GKLF), 120 to 142 (SGLI…SPVI), 152 to 174 (AISA…GKYF), 181 to 203 (YGLW…YAFS), 209 to 231 (FSVI…FSYI), 261 to 283 (IFPW…IIPN), and 316 to 338 (SGFA…SFLV).

The protein belongs to the UPF0324 family.

Its subcellular location is the cell membrane. The protein is UPF0324 membrane protein CTC_01844 of Clostridium tetani (strain Massachusetts / E88).